The primary structure comprises 105 residues: Small ribosomal subunit protein uS10 (105 aa).

The protein belongs to the universal ribosomal protein uS10 family. In terms of assembly, part of the 30S ribosomal subunit.

Involved in the binding of tRNA to the ribosomes. In Acaryochloris marina (strain MBIC 11017), this protein is Small ribosomal subunit protein uS10.